A 446-amino-acid polypeptide reads, in one-letter code: Coiled-coil domain-containing protein 112 (446 aa).

2 coiled-coil regions span residues 35–116 and 219–400; these read KTER…RKID and ERKK…NVSR. Disordered regions lie at residues 253–272 and 390–430; these read FHNK…KKQK and LKEK…LLHI. Positions 255 to 268 are enriched in basic and acidic residues; sequence NKQEDNQKQKEEQR.

It localises to the cytoplasm. The protein resides in the cytoskeleton. It is found in the microtubule organizing center. The protein localises to the centrosome. Its subcellular location is the centriolar satellite. This Homo sapiens (Human) protein is Coiled-coil domain-containing protein 112 (CCDC112).